The chain runs to 316 residues: L-lactate dehydrogenase (316 aa).

Residues V15, D37, K42, Y68, and G82–L83 each bind NAD(+). Substrate contacts are provided by residues Q85, R91, and N123–D126. Residues A121–N123 and T146 each bind NAD(+). Position 151 to 154 (D151 to R154) interacts with substrate. Beta-D-fructose 1,6-bisphosphate-binding residues include R156 and H171. The active-site Proton acceptor is H178. At Y222 the chain carries Phosphotyrosine. T231 contributes to the substrate binding site.

This sequence belongs to the LDH/MDH superfamily. LDH family. In terms of assembly, homotetramer.

It localises to the cytoplasm. The catalysed reaction is (S)-lactate + NAD(+) = pyruvate + NADH + H(+). Its pathway is fermentation; pyruvate fermentation to lactate; (S)-lactate from pyruvate: step 1/1. Its activity is regulated as follows. Allosterically activated by fructose 1,6-bisphosphate (FBP). In terms of biological role, catalyzes the conversion of lactate to pyruvate. The chain is L-lactate dehydrogenase from Borreliella burgdorferi (strain ATCC 35210 / DSM 4680 / CIP 102532 / B31) (Borrelia burgdorferi).